Consider the following 66-residue polypeptide: U10-theraphotoxin-Cg1a 2 (66 aa).

An N-terminal signal peptide occupies residues 1-21 (MKTSVLFVIFGLALLLCLSFA). Residues 22–29 (AELEDTGR) constitute a propeptide that is removed on maturation. 3 disulfides stabilise this stretch: cysteine 31-cysteine 46, cysteine 38-cysteine 51, and cysteine 45-cysteine 58.

The protein belongs to the neurotoxin 10 (Hwtx-1) family. 29 (Jztx-13) subfamily. Expressed by the venom gland.

It localises to the secreted. In terms of biological role, probable ion channel inhibitor. This Chilobrachys guangxiensis (Chinese earth tiger tarantula) protein is U10-theraphotoxin-Cg1a 2.